A 633-amino-acid polypeptide reads, in one-letter code: 1-deoxy-D-xylulose-5-phosphate synthase 2 (633 aa).

Thiamine diphosphate is bound by residues histidine 73 and 113 to 115 (SHA). Position 145 (aspartate 145) interacts with Mg(2+). Thiamine diphosphate-binding positions include 146-147 (GA), asparagine 175, tyrosine 286, and glutamate 367. Mg(2+) is bound at residue asparagine 175.

Belongs to the transketolase family. DXPS subfamily. Homodimer. Mg(2+) is required as a cofactor. The cofactor is thiamine diphosphate.

It carries out the reaction D-glyceraldehyde 3-phosphate + pyruvate + H(+) = 1-deoxy-D-xylulose 5-phosphate + CO2. It functions in the pathway metabolic intermediate biosynthesis; 1-deoxy-D-xylulose 5-phosphate biosynthesis; 1-deoxy-D-xylulose 5-phosphate from D-glyceraldehyde 3-phosphate and pyruvate: step 1/1. Functionally, catalyzes the acyloin condensation reaction between C atoms 2 and 3 of pyruvate and glyceraldehyde 3-phosphate to yield 1-deoxy-D-xylulose-5-phosphate (DXP). In Kitasatospora griseola (Streptomyces griseolosporeus), this protein is 1-deoxy-D-xylulose-5-phosphate synthase 2.